Consider the following 619-residue polypeptide: Leucine aminopeptidase 2 (619 aa).

A peptide is bound by residues 141–143 and 273–278; these read QCQ and PYGGME. H302 is a binding site for Zn(2+). E303 functions as the Proton acceptor in the catalytic mechanism. 2 residues coordinate Zn(2+): H306 and E325. Y390 (proton donor) is an active-site residue.

Belongs to the peptidase M1 family. Requires Zn(2+) as cofactor.

Its subcellular location is the cytoplasm. It localises to the nucleus. The catalysed reaction is an epoxide + H2O = an ethanediol. In terms of biological role, aminopeptidase that preferentially cleaves di- and tripeptides. Also has low epoxide hydrolase activity (in vitro). Can hydrolyze the epoxide leukotriene LTA(4) but it forms preferentially 5,6-dihydroxy-7,9,11,14-eicosatetraenoic acid rather than the cytokine leukotriene B(4) as the product compared to the homologous mammalian enzyme (in vitro). This is Leucine aminopeptidase 2 from Coccidioides immitis (strain RS) (Valley fever fungus).